Here is a 59-residue protein sequence, read N- to C-terminus: Sec-independent protein translocase protein TatA (59 aa).

A helical transmembrane segment spans residues 1–21; sequence MGRLGLTEILVIVGIVILLFG.

It belongs to the TatA/E family. As to quaternary structure, forms a complex with TatC.

It localises to the cell inner membrane. Functionally, part of the twin-arginine translocation (Tat) system that transports large folded proteins containing a characteristic twin-arginine motif in their signal peptide across membranes. TatA could form the protein-conducting channel of the Tat system. This is Sec-independent protein translocase protein TatA from Flavobacterium johnsoniae (strain ATCC 17061 / DSM 2064 / JCM 8514 / BCRC 14874 / CCUG 350202 / NBRC 14942 / NCIMB 11054 / UW101) (Cytophaga johnsonae).